The following is a 72-amino-acid chain: Putative membrane protein insertion efficiency factor (72 aa).

Belongs to the UPF0161 family.

It localises to the cell inner membrane. Its function is as follows. Could be involved in insertion of integral membrane proteins into the membrane. The protein is Putative membrane protein insertion efficiency factor of Amoebophilus asiaticus (strain 5a2).